A 222-amino-acid chain; its full sequence is Eukaryotic translation initiation factor 3 subunit K (222 aa).

The PCI domain occupies tyrosine 46–lysine 208.

Belongs to the eIF-3 subunit K family. In terms of assembly, component of the eukaryotic translation initiation factor 3 (eIF-3) complex. The eIF-3 complex interacts with pix.

Its subcellular location is the cytoplasm. Its function is as follows. Component of the eukaryotic translation initiation factor 3 (eIF-3) complex, which is involved in protein synthesis of a specialized repertoire of mRNAs and, together with other initiation factors, stimulates binding of mRNA and methionyl-tRNAi to the 40S ribosome. The eIF-3 complex specifically targets and initiates translation of a subset of mRNAs involved in cell proliferation. The sequence is that of Eukaryotic translation initiation factor 3 subunit K from Drosophila persimilis (Fruit fly).